The sequence spans 244 residues: Ribonuclease 3 (244 aa).

The RNase III domain maps to 7 to 134 (FEEVEKTLNI…IIAAIYIDSG (128 aa)). Glu47 contributes to the Mg(2+) binding site. Asp51 is an active-site residue. Mg(2+) is bound by residues Asn120 and Glu123. Glu123 is a catalytic residue. Residues 161 to 230 (DYKTNLQEIV…AQDALKKLKS (70 aa)) enclose the DRBM domain.

The protein belongs to the ribonuclease III family. In terms of assembly, homodimer. The cofactor is Mg(2+).

The protein localises to the cytoplasm. It carries out the reaction Endonucleolytic cleavage to 5'-phosphomonoester.. Functionally, digests double-stranded RNA. Involved in the processing of primary rRNA transcript to yield the immediate precursors to the large and small rRNAs (23S and 16S). Processes some mRNAs, and tRNAs when they are encoded in the rRNA operon. Processes pre-crRNA and tracrRNA of type II CRISPR loci if present in the organism. The chain is Ribonuclease 3 from Clostridium kluyveri (strain NBRC 12016).